Consider the following 331-residue polypeptide: Glutamyl-tRNA reductase (331 aa).

Residues 49-52, serine 107, 112-114, and glutamine 118 each bind substrate; these read TCNR and EDQ. Cysteine 50 (nucleophile) is an active-site residue. 184–189 provides a ligand contact to NADP(+); it reads GNGEIG.

It belongs to the glutamyl-tRNA reductase family. As to quaternary structure, homodimer.

The catalysed reaction is (S)-4-amino-5-oxopentanoate + tRNA(Glu) + NADP(+) = L-glutamyl-tRNA(Glu) + NADPH + H(+). The protein operates within porphyrin-containing compound metabolism; protoporphyrin-IX biosynthesis; 5-aminolevulinate from L-glutamyl-tRNA(Glu): step 1/2. Its function is as follows. Catalyzes the NADPH-dependent reduction of glutamyl-tRNA(Glu) to glutamate 1-semialdehyde (GSA). The sequence is that of Glutamyl-tRNA reductase from Acetivibrio thermocellus (strain ATCC 27405 / DSM 1237 / JCM 9322 / NBRC 103400 / NCIMB 10682 / NRRL B-4536 / VPI 7372) (Clostridium thermocellum).